A 710-amino-acid polypeptide reads, in one-letter code: Adenylosuccinate synthetase (710 aa).

Disordered regions lie at residues 1–51 (MPVR…PVPQ) and 84–111 (DEPP…GRSK). Composition is skewed to polar residues over residues 10-27 (YNNS…STTA) and 101-111 (ANASSSSGRSK). GTP is bound by residues 180–186 (GDEGKGK) and 210–212 (GHT). Asp-181 functions as the Proton acceptor in the catalytic mechanism. Mg(2+)-binding residues include Asp-181 and Gly-210. Residues 181 to 184 (DEGK), 208 to 211 (NAGH), Thr-295, Lys-309, Gln-421, Thr-437, and Lys-567 each bind IMP. His-211 (proton donor) is an active-site residue. Position 563–569 (563–569 (AVTKKPR)) interacts with substrate. GTP is bound by residues Arg-569 and 697–699 (GNG).

This sequence belongs to the adenylosuccinate synthetase family. Homodimer. The cofactor is Mg(2+).

The protein resides in the cytoplasm. The catalysed reaction is IMP + L-aspartate + GTP = N(6)-(1,2-dicarboxyethyl)-AMP + GDP + phosphate + 2 H(+). It participates in purine metabolism; AMP biosynthesis via de novo pathway; AMP from IMP: step 1/2. Plays an important role in the salvage pathway for purine nucleotide biosynthesis. Catalyzes the first committed step in the biosynthesis of AMP from IMP. This is Adenylosuccinate synthetase from Leishmania infantum.